The sequence spans 424 residues: Tyrosine--tRNA ligase (424 aa).

An L-tyrosine-binding site is contributed by Tyr-37. The short motif at 42–51 (PTADSLHIGS) is the 'HIGH' region element. Residues Tyr-174 and Gln-178 each coordinate L-tyrosine. Positions 234 to 238 (KFGKT) match the 'KMSKS' region motif. Lys-237 lines the ATP pocket. One can recognise an S4 RNA-binding domain in the interval 357-422 (SGLIDALAAG…RGKKLYALVD (66 aa)).

It belongs to the class-I aminoacyl-tRNA synthetase family. TyrS type 1 subfamily. As to quaternary structure, homodimer.

It is found in the cytoplasm. The enzyme catalyses tRNA(Tyr) + L-tyrosine + ATP = L-tyrosyl-tRNA(Tyr) + AMP + diphosphate + H(+). Its function is as follows. Catalyzes the attachment of tyrosine to tRNA(Tyr) in a two-step reaction: tyrosine is first activated by ATP to form Tyr-AMP and then transferred to the acceptor end of tRNA(Tyr). The sequence is that of Tyrosine--tRNA ligase from Chromobacterium violaceum (strain ATCC 12472 / DSM 30191 / JCM 1249 / CCUG 213 / NBRC 12614 / NCIMB 9131 / NCTC 9757 / MK).